The sequence spans 57 residues: Small hydrophobic protein (57 aa).

At M1–L8 the chain is on the virion surface side. Residues Y9–I29 form a helical membrane-spanning segment. Residues L30 to L57 are Intravirion-facing.

This sequence belongs to the rubulavirus small hydrophobic protein family. As to quaternary structure, interacts with host TNFRSF1A, RIPK1 and IRAK1; these interactions interfere with host NF-kappa-B activation at the level of receptor complexes. Interacts with host protein UBQLN4.

Its subcellular location is the virion membrane. The protein resides in the host cell membrane. Functionally, plays a role in the inhibition of the host NF-kappa-B pathway. This inhibition occurs at the receptor level, by preventing the signaling of TNFR1 as well as IL-1R and TLR3. The polypeptide is Small hydrophobic protein (SH) (Mumps virus genotype A (strain Jeryl-Lynn) (MuV)).